The primary structure comprises 174 residues: Phytochrome-interacting ankyrin-repeat protein 2 (174 aa).

Residues 1–13 (MLQEPSAAFSLRR) are compositionally biased toward low complexity. The segment at 1–29 (MLQEPSAAFSLRRNSFRRRSPRSNVDDRG) is disordered. The residue at position 15 (Ser-15) is a Phosphoserine. 3 ANK repeats span residues 28–57 (RGWNPLHIKARKGDLKSVKQLLDQGMDVNA), 65–94 (KGVSALHLAAEGGHIEVMDLLLERGANIDA), and 100–129 (CGWTPLHAAAKERKREAVKFLVENGAFLAD).

As to quaternary structure, interacts with phytochrome A (PHYA), both in Pr and Pfr forms. Binds to PIF3, a repressor of photomorphogenesis in response to phytochrome-mediated light signaling; this interaction may trigger the repression of PHYA-mediated PIF3 phosphorylation. Interacts with SIGE/SIG5 in mitochondrion. Interacts with RPS9M (via C terminus). Post-translationally, phosphorylated by PHYA. In terms of tissue distribution, mostly expressed in flowers, cotyledons, leaves and siliques, and, to a lower extent, in roots and stems. Also detected at low levels in seedlings grown in continuous dark or light conditions. Expressed in male and female gametophytes.

The protein resides in the cytoplasm. It is found in the nucleus. It localises to the mitochondrion. In terms of biological role, promotes anthocyanin accumulation through interaction with PHYA, especially in response to far-red light, high light and sucrose treatment, probably by triggering A3G2XYLT/UF3GT expression. Required for gametophytes development as well as male-female gamete recognition during fertilization, possibly by regulating mitochondrial gene expression. Represses PHYA-mediated PIF3 phosphorylation. The chain is Phytochrome-interacting ankyrin-repeat protein 2 from Arabidopsis thaliana (Mouse-ear cress).